The sequence spans 1165 residues: MGVNTAGDPQKSQPKINKGGIGKDESFGALFKPVYKGKKLADPVPTIEDKWQLLPAFLKVKGLVKQHLDSYNYFVDVDLKKIVQANEKVTSDVEPWFYLKYLDIRVGAPVRTDADAIQASISPHECRLRDLTYGANIYVDIEYTRGKQVVRRRNVPIGRMPVMLRSNKCVLSGKNEMEMAALNECPLDPGGYFIVKGTEKVILVQEQLSKNRIIVEAEPKKGLWQASVTSSTHERKSKTYVITKNGKLYLKHNSVADDIPIVVVLKAMGLQSDQEIFELVAGAEASYQDLFAPSIEECAKLNIYTAQQALEYIGARVKVNRRAGANRLPPHEEALEVLAAVVLAHINVFNLEFRPKAVYIGIMARRVLMAMVDPLQVDDRDYVGNKRLELAGQLLALLFEDLFKKFNSDLKLNIDKVLKKPHRTQEFDAYNQLTVHSDHITQGMVRALSTGNWSLKRFKMERAGVTHVLSRLSYISALGMMTRITSQFEKTRKVSGPRSLQASQFGMLCTSDTPEGEACGLVKNLALMTHITTDEEEEPIIKLAYAFGIEDIHVISGRELHSHGTYLVYLNGAILGISRYPSLFVASFRKLRRSGKISPFIGIFINTHQRAVFISTDGGRICRPLIIVQNGLPKVESKHIRLLKEGKWGFEDFLKQGLVEYVDVNEENDSLISVYERDITPDTTHLEIEPFTILGAVAGLIPYPHHNQSPRNTYQCAMGKQAIGAIAYNQLQRIDTLLYLMVYPQQPMVKTKTIELIGYDKLPAGQNATVAIMSYSGYDIEDALVLNKSSIDRGFGRCQVFHKHSVIVRKYPNGTHDRIGDPQRDPETGEVVWKHGVVEDDGLAGVGCRVQPGQIYVNKQTPTNALDNSITLGHTQTVESGYKATPMTYKAPEPGYIDKVMLTTTDSDQTLIKVLMRQTRRPELGDKFSSRHGQKGVCGVIVQQEDMPFNDQGICPDIIMNPHGFPSRMTVGKMIELLSGKVGVLRGTLEYGTCFGGTKVEDASRILVEHGYNYSGKDMLTSGITGETLEAYIFMGPIYYQKLKHMVMDKMHARARGPRAVLTRQPTEGRSRDGGLRLGEMERDCLIAYGASQLLLERLMISSDACDVDVCGQCGLLGYKGWCNSCQSTREVVKMTIPYAAKLLFQELLSMNIVPRLALEDEFKY.

A disordered region spans residues 1–21; sequence MGVNTAGDPQKSQPKINKGGI. Residues cysteine 1111, cysteine 1114, cysteine 1123, and cysteine 1126 each coordinate Zn(2+). The C4-type zinc finger occupies 1111–1126; that stretch reads CGQCGLLGYKGWCNSC.

Belongs to the RNA polymerase beta chain family. In terms of assembly, component of the RNA polymerase III (Pol III) complex consisting of 17 subunits.

It is found in the nucleus. The enzyme catalyses RNA(n) + a ribonucleoside 5'-triphosphate = RNA(n+1) + diphosphate. In terms of biological role, DNA-dependent RNA polymerase catalyzes the transcription of DNA into RNA using the four ribonucleoside triphosphates as substrates. Second largest core component of RNA polymerase III which synthesizes small RNAs, such as 5S rRNA and tRNAs. Proposed to contribute to the polymerase catalytic activity and forms the polymerase active center together with the largest subunit. Pol III is composed of mobile elements and RPC2 is part of the core element with the central large cleft and probably a clamp element that moves to open and close the cleft. This Schizosaccharomyces pombe (strain 972 / ATCC 24843) (Fission yeast) protein is DNA-directed RNA polymerase III subunit RPC2 (rpc2).